The following is a 160-amino-acid chain: Cytochrome c-type biogenesis protein CcmE (160 aa).

At 1 to 8 (MNPRRKNR) the chain is on the cytoplasmic side. A helical; Signal-anchor for type II membrane protein membrane pass occupies residues 9–29 (LILVMLVLVGLGLATALVMYA). Topologically, residues 30 to 160 (LRSNIDLFYT…AVGDNSVRPS (131 aa)) are periplasmic. Heme-binding residues include His130 and Tyr134. Residues 133 to 148 (KYTPPEIEDAMKKDHP) are compositionally biased toward basic and acidic residues. Residues 133–160 (KYTPPEIEDAMKKDHPAQAVGDNSVRPS) form a disordered region.

This sequence belongs to the CcmE/CycJ family.

Its subcellular location is the cell inner membrane. Heme chaperone required for the biogenesis of c-type cytochromes. Transiently binds heme delivered by CcmC and transfers the heme to apo-cytochromes in a process facilitated by CcmF and CcmH. This is Cytochrome c-type biogenesis protein CcmE from Erwinia tasmaniensis (strain DSM 17950 / CFBP 7177 / CIP 109463 / NCPPB 4357 / Et1/99).